Consider the following 399-residue polypeptide: Argininosuccinate synthase (399 aa).

8–16 (AYSGGLDTS) is a binding site for ATP. Residue Y87 participates in L-citrulline binding. Residue G117 participates in ATP binding. Residues T119, N123, and D124 each coordinate L-aspartate. N123 serves as a coordination point for L-citrulline. Positions 127, 175, 259, and 271 each coordinate L-citrulline.

This sequence belongs to the argininosuccinate synthase family. Type 1 subfamily. Homotetramer.

The protein resides in the cytoplasm. The enzyme catalyses L-citrulline + L-aspartate + ATP = 2-(N(omega)-L-arginino)succinate + AMP + diphosphate + H(+). It participates in amino-acid biosynthesis; L-arginine biosynthesis; L-arginine from L-ornithine and carbamoyl phosphate: step 2/3. This is Argininosuccinate synthase from Corynebacterium diphtheriae (strain ATCC 700971 / NCTC 13129 / Biotype gravis).